A 201-amino-acid polypeptide reads, in one-letter code: Translation initiation factor IF-3 (201 aa).

This sequence belongs to the IF-3 family. Monomer.

Its subcellular location is the cytoplasm. Its function is as follows. IF-3 binds to the 30S ribosomal subunit and shifts the equilibrium between 70S ribosomes and their 50S and 30S subunits in favor of the free subunits, thus enhancing the availability of 30S subunits on which protein synthesis initiation begins. In Prochlorococcus marinus (strain SARG / CCMP1375 / SS120), this protein is Translation initiation factor IF-3.